The chain runs to 328 residues: PDZ and LIM domain protein 1 (328 aa).

Thr-2 carries the post-translational modification N-acetylthreonine. Residues 3–85 (TLQIVLQGPG…NMTLTVARSE (83 aa)) form the PDZ domain. Ser-90 and Ser-130 each carry phosphoserine. Residue Tyr-144 is modified to Phosphotyrosine. Residues 257-316 (PMCDKCGTGIVGVFVKLRERHRHPECYVCTDCGTNLKQKGHFFVEDQIYCEKHARERVTP) form the LIM zinc-binding domain. The Zn(2+) site is built by Cys-259, Cys-262, His-279, Cys-282, Cys-285, Cys-288, Cys-306, and His-309. Thr-315 is subject to Phosphothreonine. At Tyr-320 the chain carries Phosphotyrosine.

In terms of assembly, interacts with ACTN1, ACTN2 and ACTN4. Interacts with PDLIM4.

It is found in the cytoplasm. Its subcellular location is the cytoskeleton. It localises to the myofibril. The protein localises to the sarcomere. The protein resides in the z line. In terms of biological role, cytoskeletal protein that may act as an adapter that brings other proteins (like kinases) to the cytoskeleton. Involved in assembly, disassembly and directioning of stress fibers in fibroblasts. Required for the localization of ACTN1 and PALLD to stress fibers. Required for cell migration and in maintaining cell polarity of fibroblasts. This chain is PDZ and LIM domain protein 1 (PDLIM1), found in Bos taurus (Bovine).